The primary structure comprises 2560 residues: Plipastatin synthase subunit B (2560 aa).

Residues 7–310 (IQDIYPLSHM…NTVPVRIRSA (304 aa)) are condensation 1. A domain 1 (tyrosine-activating) region spans residues 7–1042 (IQDIYPLSHM…AVKLMSLKEH (1036 aa)). Residues 496–889 (TYRQLQVRAN…QAPGVKEAAV (394 aa)) are adenylation 1. A Carrier 1 domain is found at 965-1040 (APRTLIEADL…SMAVKLMSLK (76 aa)). Serine 1000 is modified (O-(pantetheine 4'-phosphoryl)serine). Residues 1052–1342 (QRDVYPLSFS…NTLAMRSKPE (291 aa)) are condensation 2. The tract at residues 1052 to 2553 (QRDVYPLSFS…DLTLDELSEI (1502 aa)) is domain 2 (D-allo-threonine-activating). The segment at 1527 to 1927 (TYRDLNEKAE…QYPMIKEAAV (401 aa)) is adenylation 2. One can recognise a Carrier 2 domain in the interval 2006 to 2080 (SPRNEIETVM…ELSARVRKDV (75 aa)). Serine 2041 bears the O-(pantetheine 4'-phosphoryl)serine mark. Residues 2088-2553 (VEGEITWTPI…DLTLDELSEI (466 aa)) form an epimerization region.

This sequence belongs to the ATP-dependent AMP-binding enzyme family. Requires pantetheine 4'-phosphate as cofactor.

Functionally, this protein is a multifunctional enzyme, able to activate and polymerize the amino acids Tyr and Thr as part of the biosynthesis of the lipopeptide antibiotic plipastatin. The Thr residue is further converted to the D-allo-isomer form. The activation sites for these amino acids consist of individual domains. This is Plipastatin synthase subunit B (ppsB) from Bacillus subtilis (strain 168).